We begin with the raw amino-acid sequence, 152 residues long: Ribonuclease H (152 aa).

An RNase H type-1 domain is found at 1-142; it reads MDSKVVIYTD…ADKLAVQGRE (142 aa). Residues D10, E48, D70, and D134 each contribute to the Mg(2+) site.

It belongs to the RNase H family. As to quaternary structure, monomer. Mg(2+) serves as cofactor.

It localises to the cytoplasm. The catalysed reaction is Endonucleolytic cleavage to 5'-phosphomonoester.. Its function is as follows. Endonuclease that specifically degrades the RNA of RNA-DNA hybrids. The sequence is that of Ribonuclease H from Rickettsia typhi (strain ATCC VR-144 / Wilmington).